We begin with the raw amino-acid sequence, 524 residues long: Anthranilate synthase component 1 (524 aa).

Positions 1–16 (MQTTANHSSRSTQTGT) are enriched in polar residues. Positions 1-25 (MQTTANHSSRSTQTGTRAHGAALAE) are disordered. L-tryptophan-binding positions include S74 and 298-300 (PYM). Residue 339 to 340 (GT) coordinates chorismate. Residue K355 forms an Isoglutamyl lysine isopeptide (Lys-Gln) (interchain with Q-Cter in protein Pup) linkage. E366 is a Mg(2+) binding site. Chorismate-binding positions include Y454, R474, 488–490 (GGG), and G490. E503 provides a ligand contact to Mg(2+).

Belongs to the anthranilate synthase component I family. As to quaternary structure, heterotetramer consisting of two non-identical subunits: a beta subunit (TrpG) and a large alpha subunit (TrpE). The cofactor is Mg(2+).

The catalysed reaction is chorismate + L-glutamine = anthranilate + pyruvate + L-glutamate + H(+). It participates in amino-acid biosynthesis; L-tryptophan biosynthesis; L-tryptophan from chorismate: step 1/5. Feedback inhibited by tryptophan. In terms of biological role, part of a heterotetrameric complex that catalyzes the two-step biosynthesis of anthranilate, an intermediate in the biosynthesis of L-tryptophan. In the first step, the glutamine-binding beta subunit (TrpG) of anthranilate synthase (AS) provides the glutamine amidotransferase activity which generates ammonia as a substrate that, along with chorismate, is used in the second step, catalyzed by the large alpha subunit of AS (TrpE) to produce anthranilate. In the absence of TrpG, TrpE can synthesize anthranilate directly from chorismate and high concentrations of ammonia. This Mycolicibacterium smegmatis (strain ATCC 700084 / mc(2)155) (Mycobacterium smegmatis) protein is Anthranilate synthase component 1 (trpE).